We begin with the raw amino-acid sequence, 546 residues long: Chaperonin GroEL 1 (546 aa).

Residues 30-33 (TLGP), K51, 87-91 (DGTTT), G415, 479-481 (NAA), and D495 each bind ATP. Positions 526–546 (KEDAPMPGGMPGGMGGMGMDM) are disordered. Residues 534 to 546 (GMPGGMGGMGMDM) are compositionally biased toward gly residues.

It belongs to the chaperonin (HSP60) family. Forms a cylinder of 14 subunits composed of two heptameric rings stacked back-to-back. Interacts with the co-chaperonin GroES.

Its subcellular location is the cytoplasm. The enzyme catalyses ATP + H2O + a folded polypeptide = ADP + phosphate + an unfolded polypeptide.. Functionally, together with its co-chaperonin GroES, plays an essential role in assisting protein folding. The GroEL-GroES system forms a nano-cage that allows encapsulation of the non-native substrate proteins and provides a physical environment optimized to promote and accelerate protein folding. The polypeptide is Chaperonin GroEL 1 (Burkholderia cenocepacia (strain HI2424)).